A 383-amino-acid polypeptide reads, in one-letter code: V-type proton ATPase subunit C 1-A (383 aa).

The residue at position 2 (T2) is an N-acetylthreonine.

The protein belongs to the V-ATPase C subunit family. As to quaternary structure, V-ATPase is a heteromultimeric enzyme made up of two complexes: the ATP-hydrolytic V1 complex and the proton translocation V0 complex. The V1 complex consists of three catalytic AB heterodimers that form a heterohexamer, three peripheral stalks each consisting of EG heterodimers, one central rotor including subunits D and F, and the regulatory subunits C and H. The proton translocation complex V0 consists of the proton transport subunit a, a ring of proteolipid subunits c9c'', rotary subunit d, subunits e and f, and two accessory subunits.

Subunit of the V1 complex of vacuolar(H+)-ATPase (V-ATPase), a multisubunit enzyme composed of a peripheral complex (V1) that hydrolyzes ATP and a membrane integral complex (V0) that translocates protons. V-ATPase is responsible for acidifying and maintaining the pH of intracellular compartments and in some cell types, is targeted to the plasma membrane, where it is responsible for acidifying the extracellular environment. Subunit C is necessary for the assembly of the catalytic sector of the enzyme and is likely to have a specific function in its catalytic activity. This chain is V-type proton ATPase subunit C 1-A (atp6v1c1a), found in Danio rerio (Zebrafish).